Reading from the N-terminus, the 130-residue chain is Small ribosomal subunit protein uS9 (130 aa).

This sequence belongs to the universal ribosomal protein uS9 family.

This is Small ribosomal subunit protein uS9 from Bordetella parapertussis (strain 12822 / ATCC BAA-587 / NCTC 13253).